The chain runs to 245 residues: Ribonuclease PH (245 aa).

Phosphate contacts are provided by residues Arg93 and 131-133; that span reads GTR.

The protein belongs to the RNase PH family. As to quaternary structure, homohexameric ring arranged as a trimer of dimers.

The catalysed reaction is tRNA(n+1) + phosphate = tRNA(n) + a ribonucleoside 5'-diphosphate. Its function is as follows. Phosphorolytic 3'-5' exoribonuclease that plays an important role in tRNA 3'-end maturation. Removes nucleotide residues following the 3'-CCA terminus of tRNAs; can also add nucleotides to the ends of RNA molecules by using nucleoside diphosphates as substrates, but this may not be physiologically important. Probably plays a role in initiation of 16S rRNA degradation (leading to ribosome degradation) during starvation. The chain is Ribonuclease PH from Corynebacterium glutamicum (strain R).